Consider the following 279-residue polypeptide: Uroplakin-3b (279 aa).

The N-terminal stretch at 1 to 26 (MGLPSRQPRLWLLLLVVLGWPQPCLT) is a signal peptide. At 27–200 (LDLIPYTPRI…DTWPGRRSGD (174 aa)) the chain is on the lumenal side. Asn77 carries an N-linked (GlcNAc...) asparagine glycan. The helical transmembrane segment at 201–221 (MIIITSILSSLAGLLLLAFLA) threads the bilayer. Topologically, residues 222 to 279 (ASSVRFSSLWWPEEAPEQLRIGSFMGKRYMTHHIPPSEAATLPVGCEPGLERFPSLSP) are cytoplasmic.

Belongs to the uroplakin-3 family. As to quaternary structure, heterodimer with uroplakin-1B (UPK1B). In terms of tissue distribution, expression is urothelium-specific.

The protein resides in the cell membrane. Component of the asymmetric unit membrane (AUM); a highly specialized biomembrane elaborated by terminally differentiated urothelial cells. May play an important role in AUM-cytoskeleton interaction in terminally differentiated urothelial cells. It also contributes to the formation of urothelial glycocalyx which may play an important role in preventing bacterial adherence. In Bos taurus (Bovine), this protein is Uroplakin-3b (UPK3B).